The following is a 212-amino-acid chain: Thymidylate kinase (212 aa).

Gly-15–Ser-22 contributes to the ATP binding site.

It belongs to the thymidylate kinase family.

The enzyme catalyses dTMP + ATP = dTDP + ADP. Its function is as follows. Phosphorylation of dTMP to form dTDP in both de novo and salvage pathways of dTTP synthesis. The polypeptide is Thymidylate kinase (Chromobacterium violaceum (strain ATCC 12472 / DSM 30191 / JCM 1249 / CCUG 213 / NBRC 12614 / NCIMB 9131 / NCTC 9757 / MK)).